Consider the following 133-residue polypeptide: Fatty acid-binding protein, heart (133 aa).

At V2 the chain carries N-acetylvaline. Phosphothreonine is present on T8. Position 20 is a phosphotyrosine; by Tyr-kinases (Y20). Phosphoserine is present on S23. Residue T30 is modified to Phosphothreonine. At S83 the chain carries Phosphoserine. (9Z)-octadecenoate is bound at residue 127–129; that stretch reads RTY. 127 to 129 provides a ligand contact to hexadecanoate; the sequence is RTY. Residue 127 to 129 coordinates octadecanoate; it reads RTY.

It belongs to the calycin superfamily. Fatty-acid binding protein (FABP) family.

It localises to the cytoplasm. FABPs are thought to play a role in the intracellular transport of long-chain fatty acids and their acyl-CoA esters. The protein is Fatty acid-binding protein, heart (FABP3) of Sus scrofa (Pig).